Reading from the N-terminus, the 852-residue chain is Patatin-like phospholipase domain-containing protein CaO19.1504 (852 aa).

Positions 41 to 52 (ATTDITTTPIND) are enriched in low complexity. A disordered region spans residues 41–184 (ATTDITTTPI…KKTTPTSSTS (144 aa)). A compositionally biased stretch (polar residues) spans 75 to 95 (INGTVSDSSSITDEDIMNSSY). The span at 101 to 110 (SSTNLKSNST) shows a compositional bias: low complexity. Residues 113–122 (DDDDDDDDDD) show a composition bias toward acidic residues. 2 stretches are compositionally biased toward low complexity: residues 129–142 (SGTTDNTSTTSLSS) and 158–171 (GGSRSSSSSKKGSS). The chain crosses the membrane as a helical span at residues 207 to 227 (WPILIFVFSWIGILGIFYFMI). A PNPLA domain is found at 396-588 (LCLSGGACFA…RTDIPIEALN (193 aa)). The GXSXG signature appears at 427-431 (GTSGG). Ser429 functions as the Nucleophile in the catalytic mechanism. The Proton acceptor role is filled by Asp575. Residues 800–840 (KKLLDELDNEDEEEDEEEEEVDVDDDDDDDDDSLSDSFEIT) form a disordered region. Positions 805–833 (ELDNEDEEEDEEEEEVDVDDDDDDDDDSL) are enriched in acidic residues.

This sequence belongs to the PLPL family.

It is found in the membrane. Functionally, probable lipid hydrolase. This chain is Patatin-like phospholipase domain-containing protein CaO19.1504, found in Candida albicans (strain SC5314 / ATCC MYA-2876) (Yeast).